Consider the following 204-residue polypeptide: Ras-related and estrogen-regulated growth inhibitor-like protein (204 aa).

Residues 1-204 (MNDVKLTVLG…NVFGKRRKSV (204 aa)) are small GTPase-like. Residues 10–17 (GGEGTGKS), 57–63 (DPCSQPQ), and 122–125 (NKQD) contribute to the GTP site.

Belongs to the small GTPase superfamily. Ras family.

It carries out the reaction GTP + H2O = GDP + phosphate + H(+). Its function is as follows. Binds GDP/GTP and may possess intrinsic GTPase activity. This is Ras-related and estrogen-regulated growth inhibitor-like protein (RERGL) from Bos taurus (Bovine).